Consider the following 366-residue polypeptide: Chorismate synthase (366 aa).

Residues arginine 48 and arginine 54 each contribute to the NADP(+) site. FMN is bound by residues 125-127 (RSS), 238-239 (NA), glycine 278, 293-297 (KPTSS), and arginine 319.

The protein belongs to the chorismate synthase family. Homotetramer. Requires FMNH2 as cofactor.

The catalysed reaction is 5-O-(1-carboxyvinyl)-3-phosphoshikimate = chorismate + phosphate. It participates in metabolic intermediate biosynthesis; chorismate biosynthesis; chorismate from D-erythrose 4-phosphate and phosphoenolpyruvate: step 7/7. Its function is as follows. Catalyzes the anti-1,4-elimination of the C-3 phosphate and the C-6 proR hydrogen from 5-enolpyruvylshikimate-3-phosphate (EPSP) to yield chorismate, which is the branch point compound that serves as the starting substrate for the three terminal pathways of aromatic amino acid biosynthesis. This reaction introduces a second double bond into the aromatic ring system. The sequence is that of Chorismate synthase from Burkholderia cenocepacia (strain HI2424).